The primary structure comprises 240 residues: Probable hydroxyacylglutathione hydrolase (240 aa).

The Zn(2+) site is built by His33, His35, Asp37, His38, His95, and Asp119. Substrate contacts are provided by residues Arg128, His158–Tyr160, and Arg234–Lys237. His158 contacts Zn(2+).

The protein belongs to the metallo-beta-lactamase superfamily. Glyoxalase II family. Zn(2+) serves as cofactor.

It carries out the reaction an S-(2-hydroxyacyl)glutathione + H2O = a 2-hydroxy carboxylate + glutathione + H(+). The protein operates within secondary metabolite metabolism; methylglyoxal degradation; (R)-lactate from methylglyoxal: step 2/2. Thiolesterase that catalyzes the hydrolysis of S-D-lactoyl-glutathione to form glutathione and D-lactic acid. The polypeptide is Probable hydroxyacylglutathione hydrolase (Schistosoma mansoni (Blood fluke)).